The primary structure comprises 236 residues: ATP synthase subunit a (236 aa).

The next 5 membrane-spanning stretches (helical) occupy residues 18 to 38, 79 to 99, 112 to 132, 174 to 194, and 205 to 227; these read STVMMLLVAAIIVFLIAFIST, GITLIMFIAVSNLLGLPFSIV, DPTVTMTLATMILVLSHFYGV, IYAGEILLGLLAGLASSGAVG, and WQGFSIFIGFIQAFIFTMLTMVY.

This sequence belongs to the ATPase A chain family. F-type ATPases have 2 components, CF(1) - the catalytic core - and CF(0) - the membrane proton channel. CF(1) has five subunits: alpha(3), beta(3), gamma(1), delta(1), epsilon(1). CF(0) has three main subunits: a(1), b(2) and c(9-12). The alpha and beta chains form an alternating ring which encloses part of the gamma chain. CF(1) is attached to CF(0) by a central stalk formed by the gamma and epsilon chains, while a peripheral stalk is formed by the delta and b chains.

Its subcellular location is the cell membrane. In terms of biological role, key component of the proton channel; it plays a direct role in the translocation of protons across the membrane. This is ATP synthase subunit a from Lysinibacillus sphaericus (strain C3-41).